The sequence spans 397 residues: 1-deoxy-D-xylulose 5-phosphate reductoisomerase (397 aa).

NADPH is bound by residues Ser-10, Gly-11, Ser-12, Ile-13, Ala-36, Arg-37, and Asn-124. Residue Lys-125 participates in 1-deoxy-D-xylulose 5-phosphate binding. Position 126 (Glu-126) interacts with NADPH. Asp-150 is a Mn(2+) binding site. 4 residues coordinate 1-deoxy-D-xylulose 5-phosphate: Ser-151, Glu-152, Ser-186, and His-209. Position 152 (Glu-152) interacts with Mn(2+). NADPH is bound at residue Gly-215. Ser-222, Asn-227, Lys-228, and Glu-231 together coordinate 1-deoxy-D-xylulose 5-phosphate. Glu-231 provides a ligand contact to Mn(2+).

Belongs to the DXR family. The cofactor is Mg(2+). It depends on Mn(2+) as a cofactor.

It catalyses the reaction 2-C-methyl-D-erythritol 4-phosphate + NADP(+) = 1-deoxy-D-xylulose 5-phosphate + NADPH + H(+). The protein operates within isoprenoid biosynthesis; isopentenyl diphosphate biosynthesis via DXP pathway; isopentenyl diphosphate from 1-deoxy-D-xylulose 5-phosphate: step 1/6. Functionally, catalyzes the NADPH-dependent rearrangement and reduction of 1-deoxy-D-xylulose-5-phosphate (DXP) to 2-C-methyl-D-erythritol 4-phosphate (MEP). This is 1-deoxy-D-xylulose 5-phosphate reductoisomerase from Aeromonas salmonicida (strain A449).